A 612-amino-acid polypeptide reads, in one-letter code: MPFTLPESKIAIDIDFDPDHLRQRFEADKQARERKDQLAQFQGLDDVLEVDDSDPFSEPITREPVTEELDALVLGGGFGGLTAGAYLTQNGVENFRLVEYGGDFGGTWYWNRYPGVQCDIESHIYMPLLEETGYVPSQRYADGSEIFEHAQRIGRHYGLYDRTYFQTRATHARWDEQIQRWEVTTDRGDRFVTRVLLRSNGALTKPQLPKVPGIGDFEGKIFHTSRWDYGYTGGSAAGDLAHLRDKRVAVVGTGATGVQVVPYLAQDAKELVVVQRTPSVVQPRNNRKTDPEWVASLTPGWQYERHDNFNGIISGHEVEGNLVDDGWTHLFPELTGQHLVDVPVGELPEGDQALVAELADMNLLMSAHARVDSIVTDPATADGLKPWFGYMCKRPCFNDEYLEAFNRPNVTLAASPAGIDGITSSGIVVAGTHYEVDCIIFATGFETGSGPAGIYGYDVIGREGHSMQEYFSEGARTFHGFFTHGFPNFVELGMSQTAYYVNFVYMLDRKARHAARLVRHLLDSGIGTFEPTAEAEADWVAEVRRSNEPREAYWGACTPGYYNGQGEVSKAVFRDVYNSSEIDFWNMIEAWWNSGRFEGLVFEPARDAVPVA.

FAD is bound by residues Glu99, 107-110 (TWYW), Asp119, Tyr125, and Ala169. 117 to 119 (QCD) is an NADP(+) binding site. NADP(+) contacts are provided by residues 253 to 259 (TGATGVQ), 276 to 277 (RT), and 393 to 394 (KR).

Belongs to the FAD-binding monooxygenase family. FAD is required as a cofactor.

In terms of biological role, catalyzes a Baeyer-Villiger oxidation reaction, i.e. the insertion of an oxygen atom into a carbon-carbon bond adjacent to a carbonyl, which converts ketones to esters or lactones using NADPH as an electron donor. Has a broad substrate scope and oxidizes different compounds including substituted and unsubstituted alicyclic, bicyclic-, aliphatic-ketones, ketones with an aromatic moiety, and sulfides. The highest activities are measured for 2- and 3-methylcyclohexanone, phenylacetone, bicyclo[3.2.0]hept-2-en-6-one and menthone. Cannot use NADH instead of NADPH. Is not active on benzaldehyde. The chain is Baeyer-Villiger monooxygenase 4 from Dietzia sp. (strain D5).